A 236-amino-acid polypeptide reads, in one-letter code: 2-C-methyl-D-erythritol 4-phosphate cytidylyltransferase (236 aa).

Belongs to the IspD/TarI cytidylyltransferase family. IspD subfamily.

It catalyses the reaction 2-C-methyl-D-erythritol 4-phosphate + CTP + H(+) = 4-CDP-2-C-methyl-D-erythritol + diphosphate. Its pathway is isoprenoid biosynthesis; isopentenyl diphosphate biosynthesis via DXP pathway; isopentenyl diphosphate from 1-deoxy-D-xylulose 5-phosphate: step 2/6. Catalyzes the formation of 4-diphosphocytidyl-2-C-methyl-D-erythritol from CTP and 2-C-methyl-D-erythritol 4-phosphate (MEP). This Paraburkholderia phymatum (strain DSM 17167 / CIP 108236 / LMG 21445 / STM815) (Burkholderia phymatum) protein is 2-C-methyl-D-erythritol 4-phosphate cytidylyltransferase.